A 129-amino-acid polypeptide reads, in one-letter code: Profilin-4 (129 aa).

This sequence belongs to the profilin family. In terms of tissue distribution, expressed in testis, in germ cells in seminiferous tubules (at protein level).

The protein resides in the cytoplasm. Its function is as follows. Involved in male fertility. Required for manchette development and acrosome biogenesis during spermiogenesis. Binds in vitro to phospholipids, including phosphatidylinositol 3-phosphate (PtdIns(3)P), phosphatidylinositol 4,5-bisphosphate (PtdIns(4,5)P2), phosphatidylinositol 4-phosphate (PtdIns(4)P) and phosphatidic acid (PA). Contrary to other profilin family members, does not bind to actin in vitro. The chain is Profilin-4 (Pfn4) from Mus musculus (Mouse).